Here is a 185-residue protein sequence, read N- to C-terminus: uncharacterized protein (185 aa).

The next 4 membrane-spanning stretches (helical) occupy residues 5–25 (SFLI…RIWL), 63–83 (LATV…LILI), 97–117 (FLGL…VLLI), and 149–169 (IIPA…GLQF).

It belongs to the YggT family.

The protein resides in the cell membrane. This is an uncharacterized protein from Vibrio alginolyticus.